The following is an 86-amino-acid chain: Putative defensin-like protein 234 (86 aa).

The first 26 residues, 1-26 (MRSATLLLVSCVLLSFILGNVKEVEA), serve as a signal peptide directing secretion. Disulfide bonds link Cys-34–Cys-86, Cys-44–Cys-71, Cys-52–Cys-80, and Cys-69–Cys-82.

This sequence belongs to the DEFL family.

Its subcellular location is the secreted. The chain is Putative defensin-like protein 234 (SCRL14) from Arabidopsis thaliana (Mouse-ear cress).